Here is a 283-residue protein sequence, read N- to C-terminus: Polyamine aminopropyltransferase (283 aa).

The region spanning E2–K237 is the PABS domain. Q31 contacts S-methyl-5'-thioadenosine. Residues H62 and D86 each contribute to the spermidine site. S-methyl-5'-thioadenosine is bound by residues E106 and D137–G138. Residue D155 is the Proton acceptor of the active site. Spermidine is bound at residue D155–D158. P162 is a binding site for S-methyl-5'-thioadenosine.

This sequence belongs to the spermidine/spermine synthase family. As to quaternary structure, homodimer or homotetramer.

Its subcellular location is the cytoplasm. It catalyses the reaction S-adenosyl 3-(methylsulfanyl)propylamine + putrescine = S-methyl-5'-thioadenosine + spermidine + H(+). Its pathway is amine and polyamine biosynthesis; spermidine biosynthesis; spermidine from putrescine: step 1/1. Catalyzes the irreversible transfer of a propylamine group from the amino donor S-adenosylmethioninamine (decarboxy-AdoMet) to putrescine (1,4-diaminobutane) to yield spermidine. The polypeptide is Polyamine aminopropyltransferase (Clostridium perfringens (strain 13 / Type A)).